The sequence spans 373 residues: StAR-related lipid transfer protein 7, mitochondrial (373 aa).

A mitochondrion-targeting transit peptide spans 1-61 (MFPRRPPATL…YSESSRCALL (61 aa)). The stretch at 89–114 (DEERIQEEELQRSINEMKRLEEMSNI) forms a coiled coil. One can recognise an START domain in the interval 115–330 (FQSSGVENYP…LHMATLKAKN (216 aa)). Disordered regions lie at residues 118–141 (SGVE…KDKE) and 347–373 (SSEA…IEYA).

In terms of processing, proteolytically cleaved by PARL. In terms of tissue distribution, expressed in epithelial cells of airways, peripheral bronchioles and alveoli, as well as in the basal cell layer of the epidermis (at protein level).

It is found in the mitochondrion. In terms of biological role, may play a protective role in mucosal tissues by preventing exaggerated allergic responses. This chain is StAR-related lipid transfer protein 7, mitochondrial (Stard7), found in Mus musculus (Mouse).